A 126-amino-acid polypeptide reads, in one-letter code: MSASGRPQPMGRLTTHVLDSAHGCPGHGIKIELYRVEGQQLELIATTLTNHDGRCDQPVLQGEDFRPGVYQLVFNAGDYYRARGVQLPEPAFLDQVVLRFGIASADDHYHVPLLISPYSYSTYRGS.

Positions 16, 54, and 123 each coordinate substrate.

It belongs to the transthyretin family. 5-hydroxyisourate hydrolase subfamily. In terms of assembly, homotetramer.

The enzyme catalyses 5-hydroxyisourate + H2O = 5-hydroxy-2-oxo-4-ureido-2,5-dihydro-1H-imidazole-5-carboxylate + H(+). Its function is as follows. Catalyzes the hydrolysis of 5-hydroxyisourate (HIU) to 2-oxo-4-hydroxy-4-carboxy-5-ureidoimidazoline (OHCU). This Pseudomonas aeruginosa (strain ATCC 15692 / DSM 22644 / CIP 104116 / JCM 14847 / LMG 12228 / 1C / PRS 101 / PAO1) protein is 5-hydroxyisourate hydrolase.